The primary structure comprises 33 residues: Cytochrome b6-f complex subunit 8 (33 aa).

A helical transmembrane segment spans residues 2-22 (LFTLAWASLAAVFSFSIAMVV).

It belongs to the PetN family. As to quaternary structure, the 4 large subunits of the cytochrome b6-f complex are cytochrome b6, subunit IV (17 kDa polypeptide, PetD), cytochrome f and the Rieske protein, while the 4 small subunits are PetG, PetL, PetM and PetN. The complex functions as a dimer.

The protein resides in the cellular thylakoid membrane. In terms of biological role, component of the cytochrome b6-f complex, which mediates electron transfer between photosystem II (PSII) and photosystem I (PSI), cyclic electron flow around PSI, and state transitions. In Synechococcus sp. (strain WH7803), this protein is Cytochrome b6-f complex subunit 8.